A 603-amino-acid polypeptide reads, in one-letter code: NADH-ubiquinone oxidoreductase chain 5 (603 aa).

15 consecutive transmembrane segments (helical) span residues 4 to 24 (ISTL…TTLL), 35 to 55 (ITKT…LLFV), 84 to 104 (FFSL…MEFS), 121 to 141 (LLLF…LQLF), 177 to 197 (IGDM…NSWE), 213 to 233 (LLGL…HPWL), 241 to 261 (TPVS…FTLI), 273 to 293 (VQTS…ICAL), 301 to 320 (IIAL…IGIN), 325 to 347 (AFTH…GSII), 366 to 386 (MPIT…MPFL), 413 to 433 (LIAV…ALLG), 457 to 477 (LILG…PHTT), 480 to 500 (MTMP…GFTV), and 583 to 603 (LMKL…LIAL).

The protein belongs to the complex I subunit 5 family. In terms of assembly, core subunit of respiratory chain NADH dehydrogenase (Complex I) which is composed of 45 different subunits.

It localises to the mitochondrion inner membrane. The catalysed reaction is a ubiquinone + NADH + 5 H(+)(in) = a ubiquinol + NAD(+) + 4 H(+)(out). In terms of biological role, core subunit of the mitochondrial membrane respiratory chain NADH dehydrogenase (Complex I) which catalyzes electron transfer from NADH through the respiratory chain, using ubiquinone as an electron acceptor. Essential for the catalytic activity and assembly of complex I. This chain is NADH-ubiquinone oxidoreductase chain 5 (MT-ND5), found in Mammuthus primigenius (Siberian woolly mammoth).